Consider the following 361-residue polypeptide: Inactive 2'-5'-oligoadenylate synthase 1D (361 aa).

The protein belongs to the 2-5A synthase family. Interacts with OAS1A, the interaction inhibits OAS1A catalytic activity. As to expression, expressed specifically in oocytes (at protein level). Expressed at highest level in ovary with lesser amounts in intestine, brain, thymus lung, kidney, liver and uterus.

Its subcellular location is the cytoplasm. Does not have 2'-5'-oligoadenylate synthetase activity, but can bind double-stranded RNA. May play a role in the control of female fertility, possibly by binding to and inhibiting OAS1A. This chain is Inactive 2'-5'-oligoadenylate synthase 1D, found in Mus musculus (Mouse).